Consider the following 265-residue polypeptide: Putative N(omega)-hydroxy-L-arginine synthase DcsA (265 aa).

It belongs to the DcsA family. Requires heme as cofactor.

Its function is as follows. Involved in the biosynthesis of the antibiotic D-cycloserine (DCS), a cyclic structural analog of D-alanine, used as an antitubercular agent. Could catalyze the production of N(omega)-hydroxy-L-arginine (NHA) from L-arginine. In Streptomyces lavendulae, this protein is Putative N(omega)-hydroxy-L-arginine synthase DcsA.